Consider the following 160-residue polypeptide: Archaemetzincin (160 aa).

H117 serves as a coordination point for Zn(2+). E118 functions as the Proton acceptor in the catalytic mechanism. Zn(2+)-binding residues include H121, H127, C128, C132, C151, and C154.

It belongs to the peptidase M54 family. As to quaternary structure, monomer. Zn(2+) is required as a cofactor.

Functionally, probable zinc metalloprotease whose natural substrate is unknown. This chain is Archaemetzincin, found in Archaeoglobus fulgidus (strain ATCC 49558 / DSM 4304 / JCM 9628 / NBRC 100126 / VC-16).